Reading from the N-terminus, the 312-residue chain is Acetaldehyde dehydrogenase 2 (312 aa).

11–14 is an NAD(+) binding site; the sequence is SGNI. The active-site Acyl-thioester intermediate is Cys-129. NAD(+)-binding positions include 160 to 168 and Asn-287; that span reads SAGPGTRAN.

It belongs to the acetaldehyde dehydrogenase family.

The enzyme catalyses acetaldehyde + NAD(+) + CoA = acetyl-CoA + NADH + H(+). In Novosphingobium aromaticivorans (strain ATCC 700278 / DSM 12444 / CCUG 56034 / CIP 105152 / NBRC 16084 / F199), this protein is Acetaldehyde dehydrogenase 2.